A 210-amino-acid chain; its full sequence is Ribosomal RNA large subunit methyltransferase E (210 aa).

Positions 61, 63, 81, 97, and 122 each coordinate S-adenosyl-L-methionine. Lysine 162 serves as the catalytic Proton acceptor.

It belongs to the class I-like SAM-binding methyltransferase superfamily. RNA methyltransferase RlmE family.

The protein resides in the cytoplasm. It catalyses the reaction uridine(2552) in 23S rRNA + S-adenosyl-L-methionine = 2'-O-methyluridine(2552) in 23S rRNA + S-adenosyl-L-homocysteine + H(+). Specifically methylates the uridine in position 2552 of 23S rRNA at the 2'-O position of the ribose in the fully assembled 50S ribosomal subunit. The polypeptide is Ribosomal RNA large subunit methyltransferase E (Xanthomonas oryzae pv. oryzae (strain MAFF 311018)).